A 78-amino-acid polypeptide reads, in one-letter code: Mitochondrial import inner membrane translocase subunit Tim9 (78 aa).

Residues 24–48 (CFTSCVNEFGSRTVNAKEESCANNC) carry the Twin CX3C motif motif. 2 disulfides stabilise this stretch: Cys24/Cys48 and Cys28/Cys44.

The protein belongs to the small Tim family. In terms of assembly, heterohexamer; composed of 3 copies of tim-9/tin-9.1 and 3 copies of tim-10/tin-10, named soluble 70 kDa complex. The complex associates with the tim-22 component of the TIM22 complex. Interacts with multi-pass transmembrane proteins in transit.

The protein localises to the mitochondrion inner membrane. Its function is as follows. Mitochondrial intermembrane chaperone that participates in the import and insertion of multi-pass transmembrane proteins into the mitochondrial inner membrane. May also be required for the transfer of beta-barrel precursors from the TOM complex to the sorting and assembly machinery (SAM complex) of the outer membrane. Acts as a chaperone-like protein that protects the hydrophobic precursors from aggregation and guide them through the mitochondrial intermembrane space. The polypeptide is Mitochondrial import inner membrane translocase subunit Tim9 (tin-9.1) (Caenorhabditis briggsae).